The following is a 657-amino-acid chain: DNA mismatch repair protein MutL (657 aa).

Belongs to the DNA mismatch repair MutL/HexB family.

This protein is involved in the repair of mismatches in DNA. It is required for dam-dependent methyl-directed DNA mismatch repair. May act as a 'molecular matchmaker', a protein that promotes the formation of a stable complex between two or more DNA-binding proteins in an ATP-dependent manner without itself being part of a final effector complex. This is DNA mismatch repair protein MutL from Streptococcus agalactiae serotype III (strain NEM316).